Reading from the N-terminus, the 178-residue chain is ATP synthase subunit delta (178 aa).

This sequence belongs to the ATPase delta chain family. As to quaternary structure, F-type ATPases have 2 components, F(1) - the catalytic core - and F(0) - the membrane proton channel. F(1) has five subunits: alpha(3), beta(3), gamma(1), delta(1), epsilon(1). F(0) has three main subunits: a(1), b(2) and c(10-14). The alpha and beta chains form an alternating ring which encloses part of the gamma chain. F(1) is attached to F(0) by a central stalk formed by the gamma and epsilon chains, while a peripheral stalk is formed by the delta and b chains.

The protein resides in the cell inner membrane. Its function is as follows. F(1)F(0) ATP synthase produces ATP from ADP in the presence of a proton or sodium gradient. F-type ATPases consist of two structural domains, F(1) containing the extramembraneous catalytic core and F(0) containing the membrane proton channel, linked together by a central stalk and a peripheral stalk. During catalysis, ATP synthesis in the catalytic domain of F(1) is coupled via a rotary mechanism of the central stalk subunits to proton translocation. Functionally, this protein is part of the stalk that links CF(0) to CF(1). It either transmits conformational changes from CF(0) to CF(1) or is implicated in proton conduction. The sequence is that of ATP synthase subunit delta from Pseudomonas fluorescens (strain ATCC BAA-477 / NRRL B-23932 / Pf-5).